The chain runs to 464 residues: MSAEKTNQSWGGRFSEPVDAFVARFTASVDFDKRLYRHDIMGSIAHASMLEQAGVLSAAERDAIIDGLKQIQSEIEAGQFDWRVDLEDVHMNIEARLTERIGITGKKLHTGRSRNDQVATDIRLWLRDEIDTILGEITRLQQGLLEQAERHAEVIMPGFTHLQTAQPVTFGHHLLAWFEMLARDHERLVDCRKRVNRMPLGSAALAGTTYPIQREITCRLLGFEAVGGNSLDGVSDRDFAIEFCAAASLAMMHLSRFSEELVLWTSAQFNFIELPDRFCTGSSIMPQKKNPDVPELVRGKSGRVFGHLTGLLTLMKGQPLAYNKDNQEDKEPLFDAVDTLRDSLRAFADMVPAIKPRVEAMREAARRGFSTATDLADYLVRKGLPFRDCHEIVGHAVKYGVESGKDLAEMSLDELRRFSDQISEDVFAVLTLEGSVNARDHVGGTAPAQVRAAVARGRALLAAR.

Belongs to the lyase 1 family. Argininosuccinate lyase subfamily.

It is found in the cytoplasm. It catalyses the reaction 2-(N(omega)-L-arginino)succinate = fumarate + L-arginine. Its pathway is amino-acid biosynthesis; L-arginine biosynthesis; L-arginine from L-ornithine and carbamoyl phosphate: step 3/3. This is Argininosuccinate lyase from Azotobacter vinelandii (strain DJ / ATCC BAA-1303).